Here is a 428-residue protein sequence, read N- to C-terminus: Bacteriochlorophyll synthase 44.5 kDa chain (428 aa).

The next 12 membrane-spanning stretches (helical) occupy residues 3–23 (LGWL…AVVV), 32–52 (LMVV…ALHY), 73–93 (FFVI…AVAV), 115–135 (GFGV…ATEP), 144–164 (ITWL…GHFL), 172–192 (LLWI…LAVW), 225–245 (AFTF…LILE), 269–289 (GVFF…IGSL), 291–311 (GWVV…VALG), 317–337 (ALVP…VAAI), 358–378 (LWGA…AGAA), and 393–413 (LVFG…TGVV).

It belongs to the PucC family.

Its subcellular location is the membrane. It functions in the pathway porphyrin-containing compound metabolism; bacteriochlorophyll biosynthesis (light-independent). In Rhodobacter capsulatus (strain ATCC BAA-309 / NBRC 16581 / SB1003), this protein is Bacteriochlorophyll synthase 44.5 kDa chain.